Here is a 730-residue protein sequence, read N- to C-terminus: Semaphorin-1A (730 aa).

An N-terminal signal peptide occupies residues Met1–Ala20. At Trp21–Thr630 the chain is on the extracellular side. The Sema domain maps to Lys28 to Leu490. 2 N-linked (GlcNAc...) asparagine glycosylation sites follow: Asn44 and Asn71. 2 disulfide bridges follow: Cys97–Cys107 and Cys125–Cys134. N-linked (GlcNAc...) asparagine glycosylation is found at Asn163 and Asn267. Cystine bridges form between Cys244–Cys358 and Cys268–Cys317. An N-linked (GlcNAc...) asparagine glycan is attached at Asn360. 2 cysteine pairs are disulfide-bonded: Cys493/Cys512 and Cys504/Cys521. Asn539 carries an N-linked (GlcNAc...) asparagine glycan. A helical membrane pass occupies residues Ile631–Phe651. Residues Ser652–Ile730 are Cytoplasmic-facing. Over residues Ala708–Lys720 the composition is skewed to low complexity. A disordered region spans residues Ala708–Ile730.

Belongs to the semaphorin family. As to expression, dynamically expressed on a subset of axon pathways in the developing CNS and on circumferential bands of epithelial cells in developing limb buds.

It localises to the membrane. Functionally, plays a role in growth cones guidance. The chain is Semaphorin-1A (SEMA-1A) from Schistocerca americana (American grasshopper).